A 414-amino-acid chain; its full sequence is Esterase FrsA (414 aa).

Belongs to the FrsA family.

It carries out the reaction a carboxylic ester + H2O = an alcohol + a carboxylate + H(+). Its function is as follows. Catalyzes the hydrolysis of esters. The protein is Esterase FrsA of Escherichia coli O7:K1 (strain IAI39 / ExPEC).